The primary structure comprises 361 residues: tRNA-specific 2-thiouridylase MnmA (361 aa).

Residues 10 to 17 (GMSGGVDS) and methionine 36 each bind ATP. The active-site Nucleophile is cysteine 104. The cysteines at positions 104 and 202 are disulfide-linked. Position 128 (glycine 128) interacts with ATP. The segment at 152–154 (KDQ) is interaction with tRNA. The active-site Cysteine persulfide intermediate is cysteine 202. The tract at residues 308–309 (RY) is interaction with tRNA.

It belongs to the MnmA/TRMU family.

The protein resides in the cytoplasm. The enzyme catalyses S-sulfanyl-L-cysteinyl-[protein] + uridine(34) in tRNA + AH2 + ATP = 2-thiouridine(34) in tRNA + L-cysteinyl-[protein] + A + AMP + diphosphate + H(+). In terms of biological role, catalyzes the 2-thiolation of uridine at the wobble position (U34) of tRNA, leading to the formation of s(2)U34. This is tRNA-specific 2-thiouridylase MnmA from Clostridioides difficile (strain 630) (Peptoclostridium difficile).